A 155-amino-acid chain; its full sequence is Large ribosomal subunit protein uL22c (155 aa).

It belongs to the universal ribosomal protein uL22 family. As to quaternary structure, part of the 50S ribosomal subunit.

The protein resides in the plastid. Its subcellular location is the chloroplast. In terms of biological role, this protein binds specifically to 23S rRNA. Its function is as follows. The globular domain of the protein is located near the polypeptide exit tunnel on the outside of the subunit, while an extended beta-hairpin is found that lines the wall of the exit tunnel in the center of the 70S ribosome. The polypeptide is Large ribosomal subunit protein uL22c (rpl22) (Atropa belladonna (Belladonna)).